Reading from the N-terminus, the 468-residue chain is H(+)/Cl(-) exchange transporter ClcA (468 aa).

Topologically, residues 1 to 32 (MIKRERIVKSVLAHVPKDAINQFVSRGSTPTS) are cytoplasmic. A helical membrane pass occupies residues 33 to 69 (FSVLFMAAIVGTLAGLVGTYFEIAVHFVSETRTEWLK). At 70–76 (SEIGSVL) the chain is on the periplasmic side. A helical transmembrane segment spans residues 77–100 (PLWLAAILISGALAFIGYYLVNRF). The Selectivity filter part_1 motif lies at 106–110 (GSGIP). Serine 107 is a binding site for chloride. The segment at residues 109-116 (IPEIEGAM) is an intramembrane region (helical). The Cytoplasmic portion of the chain corresponds to 117-123 (DNIRSVR). 2 helical membrane passes run 124–141 (WWRVIPVKFFGGMGALGS) and 148–166 (EGPTVQMGGAVGRMVTDIF). Positions 146-150 (GREGP) match the Selectivity filter part_2 motif. Topologically, residues 167–176 (RVKDDDTRHS) are cytoplasmic. 2 intramembrane regions (helical) span residues 177-189 (LLASGAAGGLAAA) and 193-201 (PLAAIMFVV). Over 202-214 (EEMRPQFRYSLIS) the chain is Cytoplasmic. The chain crosses the membrane as a helical span at residues 215-232 (IRAVIISAIMANIVFRAI). Residues 233–252 (NGQEAVITMPQYQSPELQSL) lie on the Periplasmic side of the membrane. Residues 253–281 (WLFLLLGSLFGVFGVVFNKLITIAQDSFV) traverse the membrane as a helical segment. At 282-287 (ALHKND) the chain is on the cytoplasmic side. The chain crosses the membrane as a helical span at residues 288–309 (RKRYLITGTILGGVFGLLLLYV). The Periplasmic portion of the chain corresponds to 310-329 (PQLTGGGIGLIPDITNGNYS). The next 2 helical transmembrane spans lie at 330–349 (ISILVMLFVGRVITTLLCFG) and 355–376 (GIFAPMLALGTLFGYAFGASAD). The Selectivity filter part_3 signature appears at 355–359 (GIFAP). Residues isoleucine 356 and phenylalanine 357 each contribute to the chloride site. The Periplasmic portion of the chain corresponds to 377–386 (MLLPSLTIEP). Positions 387-401 (GVFAIAGMGALFAAT) form an intramembrane region, helical. Positions 402 to 404 (VRA) form an intramembrane region, note=Loop between two helices. Positions 405–416 (PITGILLVIEMT) form an intramembrane region, helical. An intramembrane region (note=Loop between two helices) is located at residues 417–421 (NNYYL). A helical transmembrane segment spans residues 422–438 (ILPLIITSLGAVIVAQL). Over 439–468 (LGGQPIYSQLLHRTLKNDKLRQQDLPENQA) the chain is Cytoplasmic. A chloride-binding site is contributed by tyrosine 445.

It belongs to the chloride channel (TC 2.A.49) family. ClcA subfamily. Homodimer.

The protein resides in the cell inner membrane. It catalyses the reaction 2 chloride(in) + H(+)(out) = 2 chloride(out) + H(+)(in). Functionally, proton-coupled chloride transporter. Functions as antiport system and exchanges two chloride ions for 1 proton. Probably acts as an electrical shunt for an outwardly-directed proton pump that is linked to amino acid decarboxylation, as part of the extreme acid resistance (XAR) response. This is H(+)/Cl(-) exchange transporter ClcA from Vibrio campbellii (strain ATCC BAA-1116).